Consider the following 545-residue polypeptide: MSNRAKSPALDAVVIGAGVTGIYQAFLINQAGMKVLGIEAGEDVGGTWYWNRYPGCRLDTESYAYGYFALKGIIPEWEWSENFASQPEMLRYVNRAADAMDVRKHYRFNTRVTAARYVENDRLWEVTLDNEEVVTCRFLISATGPLSASRMPDIKGIDSFKGESFHSSRWPTDAEGAPKGVDFTGKRVGVIGTGATGVQIIPIAAETAKELYVFQRTPNWCTPLGNSPMSKEKMDSLRNRYPTILEYVKSTDTAFPYHRDPRKGTDVSESERDAFFEELYRQPGYGIWLSGFRDLLLNKESNKFLADFVAKKIRQRVKDPVVAEKLIPKDHPFGAKRVPMETNYYETYNRDNVHLVDIREAPIQEVTPEGIKTADAAYDLDVIIYATGFDAVTGSLDRIDIRGKDNVRLIDAWAEGPSTYLGLQARGFPNFFTLVGPHNGSTFCNVGVCGGLQAEWVLRMISYMKDNGFTYSEPTQAAENRWTEEVYADFSRTLLAEANAWWVKTTTKPDGSVVRRTLVHVSGGPEYRKRCEQVAYNNYNGFELA.

FAD contacts are provided by residues T20, E39, 47 to 50 (TWYW), 59 to 60 (DT), Y65, and V112. 57–59 (RLD) contributes to the NADP(+) binding site. NADP(+) is bound by residues 193–199 (TGATGVQ) and 216–217 (RT). V446 lines the FAD pocket. W501 contacts NADP(+).

It belongs to the FAD-binding monooxygenase family. As to quaternary structure, homodimer. FAD serves as cofactor.

The catalysed reaction is [(1R)-2,2,3-trimethyl-5-oxocyclopent-3-enyl]acetyl-CoA + NADPH + O2 + H(+) = [(2R)-3,3,4-trimethyl-6-oxo-3,6-dihydro-1H-pyran-2-yl]acetyl-CoA + NADP(+) + H2O. It functions in the pathway terpene metabolism; (R)-camphor degradation. Involved in the degradation of (+)-camphor. Catalyzes the lactonization of 2-oxo-delta(3)-4,5, 5-trimethylcyclopentenylacetyl-CoA (OT-CoA), a key intermediate in the metabolism of camphor. 2-Oxocyclopentyl ethyl acetate is also a good substrate, as is 2-oxocyclohexyl ethyl acetate and methyl-substituted cyclohexanones, but free acid is a poor substrate. The protein is 2-oxo-Delta(3)-4,5,5-trimethylcyclopentenylacetyl-CoA monooxygenase (otemo) of Pseudomonas putida (Arthrobacter siderocapsulatus).